The sequence spans 242 residues: Fibrinolytic enzyme, isozyme C (242 aa).

The 242-residue stretch at 1–242 folds into the Peptidase S1 domain; it reads VIGGTNASPG…YLGWIGDNSR (242 aa). Cysteine 29 and cysteine 45 are disulfide-bonded. Catalysis depends on charge relay system residues histidine 44 and aspartate 93. Cystine bridges form between cysteine 127/cysteine 197, cysteine 158/cysteine 176, and cysteine 187/cysteine 219. The active-site Charge relay system is serine 191.

This sequence belongs to the peptidase S1 family.

The sequence is that of Fibrinolytic enzyme, isozyme C from Lumbricus rubellus (Humus earthworm).